The chain runs to 102 residues: Large ribosomal subunit protein bL21 (102 aa).

Belongs to the bacterial ribosomal protein bL21 family. As to quaternary structure, part of the 50S ribosomal subunit. Contacts protein L20.

In terms of biological role, this protein binds to 23S rRNA in the presence of protein L20. The chain is Large ribosomal subunit protein bL21 from Lachnoclostridium phytofermentans (strain ATCC 700394 / DSM 18823 / ISDg) (Clostridium phytofermentans).